We begin with the raw amino-acid sequence, 112 residues long: UPF0342 protein SPP_1392 (112 aa).

It belongs to the UPF0342 family.

This chain is UPF0342 protein SPP_1392, found in Streptococcus pneumoniae (strain P1031).